The following is a 328-amino-acid chain: 4-hydroxy-2-oxoglutarate aldolase, mitochondrial (328 aa).

A mitochondrion-targeting transit peptide spans methionine 1 to leucine 26. A substrate-binding site is contributed by serine 76 to asparagine 77. Lysine 195 serves as the catalytic Schiff-base intermediate with substrate. 2 residues coordinate substrate: serine 197 and glycine 221.

It belongs to the DapA family. In terms of assembly, homotetramer.

The protein resides in the mitochondrion. The catalysed reaction is (4S)-4-hydroxy-2-oxoglutarate = glyoxylate + pyruvate. The enzyme catalyses (4R)-4-hydroxy-2-oxoglutarate = glyoxylate + pyruvate. With respect to regulation, inhibited by divalent cations. Its function is as follows. Catalyzes the final step in the metabolic pathway of hydroxyproline. In Xenopus tropicalis (Western clawed frog), this protein is 4-hydroxy-2-oxoglutarate aldolase, mitochondrial (hoga1).